A 128-amino-acid polypeptide reads, in one-letter code: Arsenic resistance transcriptional regulator ArsR1 (128 aa).

The 93-residue stretch at 11-103 (MREILTPPIV…AMLKGVVDAN (93 aa)) folds into the HTH arsR-type domain. Positions 43 and 45 each coordinate arsenite. Positions 44–67 (VCELTHALELSQPKISRHLAQLRE) form a DNA-binding region, H-T-H motif.

Homodimer.

The protein localises to the cytoplasm. Its function is as follows. Binds arsenite and regulates the expression of arsenic efflux pumps. In vitro, also binds antimony and bismuth, but not arsenate. The protein is Arsenic resistance transcriptional regulator ArsR1 of Pseudomonas putida (strain ATCC 47054 / DSM 6125 / CFBP 8728 / NCIMB 11950 / KT2440).